A 577-amino-acid polypeptide reads, in one-letter code: Hemagglutinin-neuraminidase (577 aa).

Residues 1–26 (MDRAVSQVALENDEREAKNTWRLIFR) lie on the Intravirion side of the membrane. Residues 27–47 (IAILFLTVVTLAISVASLLYS) form a helical membrane-spanning segment. At 48–577 (MGASTPSDLV…DDGVREARSG (530 aa)) the chain is on the virion surface side. N-linked (GlcNAc...) asparagine; by host glycosylation is present at Asn-119. The interval 124-152 (GAPIHDPDYIGGIGKELIVDDASDVTSFY) is important for interaction with fusion/F protein. Disulfide bonds link Cys-172-Cys-196, Cys-186-Cys-247, and Cys-238-Cys-251. The interval 234-239 (NRKSCS) is involved in neuraminidase activity. 2 N-linked (GlcNAc...) asparagine; by host glycosylation sites follow: Asn-341 and Asn-433. 2 cysteine pairs are disulfide-bonded: Cys-344–Cys-461 and Cys-455–Cys-465. Residues Asn-481 and Asn-538 are each glycosylated (N-linked (GlcNAc...) asparagine; by host). Cysteines 531 and 542 form a disulfide.

Belongs to the paramyxoviruses hemagglutinin-neuraminidase family. In terms of assembly, homotetramer; composed of disulfide-linked homodimers. Interacts with F protein trimer. Interacts with host CG-1B; this interaction inhibits viral adsorption and replication rather than internalization.

The protein resides in the virion membrane. It is found in the host cell membrane. It carries out the reaction Hydrolysis of alpha-(2-&gt;3)-, alpha-(2-&gt;6)-, alpha-(2-&gt;8)- glycosidic linkages of terminal sialic acid residues in oligosaccharides, glycoproteins, glycolipids, colominic acid and synthetic substrates.. In terms of biological role, mediates the viral entry into the host cell together with fusion/F protein. Attaches the virus to sialic acid-containing cell receptors and thereby initiates infection. Binding of HN protein to the receptor induces a conformational change that allows the F protein to trigger virion/cell membranes fusion. Functionally, neuraminidase activity ensures the efficient spread of the virus by dissociating the mature virions from the neuraminic acid containing glycoproteins. The protein is Hemagglutinin-neuraminidase (HN) of Newcastle disease virus (strain Chicken/United States/LaSota/46) (NDV).